The chain runs to 404 residues: Aspergillopepsin-1 (404 aa).

The first 20 residues, 1-20, serve as a signal peptide directing secretion; that stretch reads MVILSKVAAVAVGLSTVASA. Positions 21-77 are cleaved as a propeptide — activation peptide; that stretch reads LPTGPSHSPHARRGFTINQITRQTARVGPKTASFPAIYSRALAKYGGTVPAHLKSAV. One can recognise a Peptidase A1 domain in the interval 95–401; that stretch reads YLTPVNIGGT…DSQGPRLGFA (307 aa). The active site involves D111. A glycan (N-linked (GlcNAc...) asparagine) is linked at N140. Residue D293 is part of the active site. C329 and C364 are oxidised to a cystine.

It belongs to the peptidase A1 family. In terms of assembly, monomer.

It is found in the secreted. It carries out the reaction Hydrolysis of proteins with broad specificity. Generally favors hydrophobic residues in P1 and P1', but also accepts Lys in P1, which leads to activation of trypsinogen. Does not clot milk.. Its function is as follows. Secreted aspartic endopeptidase that allows assimilation of proteinaceous substrates. The scissile peptide bond is attacked by a nucleophilic water molecule activated by two aspartic residues in the active site. Shows a broad primary substrate specificity. Favors hydrophobic residues at the P1 and P1' positions, but also accepts a lysine residue in the P1 position, leading to the activation of trypsinogen and chymotrypsinogen A. The sequence is that of Aspergillopepsin-1 (pepA) from Aspergillus flavus (strain ATCC 200026 / FGSC A1120 / IAM 13836 / NRRL 3357 / JCM 12722 / SRRC 167).